The sequence spans 150 residues: Histone H2B.2 (150 aa).

Basic and acidic residues-rich tracts occupy residues 1 to 21 (MAPKAEKKPAEKKPAEEKAGE) and 33 to 49 (EKRLPASKGEKGGEGKK). The tract at residues 1-58 (MAPKAEKKPAEKKPAEEKAGEKAPAAGKKPKAEKRLPASKGEKGGEGKKERGRKKAKK) is disordered. N6-acetyllysine occurs at positions 7 and 34. Residue lysine 146 forms a Glycyl lysine isopeptide (Lys-Gly) (interchain with G-Cter in ubiquitin) linkage.

The protein belongs to the histone H2B family. As to quaternary structure, the nucleosome is a histone octamer containing two molecules each of H2A, H2B, H3 and H4 assembled in one H3-H4 heterotetramer and two H2A-H2B heterodimers. The octamer wraps approximately 147 bp of DNA. In terms of processing, can be acetylated to form H2BK6ac and H2BK33ac. Monoubiquitinated by BRE1 to form H2BK143ub1 and deubiquitinated by UBP26. Required for heterochromatic histone H3 di- and trimethylation at H3K4me. May give a specific tag for epigenetic transcriptional activation.

It is found in the nucleus. The protein localises to the chromosome. Functionally, core component of nucleosome. Nucleosomes wrap and compact DNA into chromatin, limiting DNA accessibility to the cellular machineries which require DNA as a template. Histones thereby play a central role in transcription regulation, DNA repair, DNA replication and chromosomal stability. DNA accessibility is regulated via a complex set of post-translational modifications of histones, also called histone code, and nucleosome remodeling. This chain is Histone H2B.2 (H2B.2), found in Oryza sativa subsp. indica (Rice).